The following is a 194-amino-acid chain: Ribosome maturation factor RimM (194 aa).

One can recognise a PRC barrel domain in the interval D113–Y194.

It belongs to the RimM family. In terms of assembly, binds ribosomal protein uS19.

It is found in the cytoplasm. An accessory protein needed during the final step in the assembly of 30S ribosomal subunit, possibly for assembly of the head region. Essential for efficient processing of 16S rRNA. May be needed both before and after RbfA during the maturation of 16S rRNA. It has affinity for free ribosomal 30S subunits but not for 70S ribosomes. The polypeptide is Ribosome maturation factor RimM (Leptothrix cholodnii (strain ATCC 51168 / LMG 8142 / SP-6) (Leptothrix discophora (strain SP-6))).